Here is a 36-residue protein sequence, read N- to C-terminus: Pancreatic polypeptide (36 aa).

Tyr36 bears the Tyrosine amide mark.

Belongs to the NPY family.

Its subcellular location is the secreted. Its function is as follows. Hormone secreted by pancreatic cells that acts as a regulator of pancreatic and gastrointestinal functions. The protein is Pancreatic polypeptide (PPY) of Meleagris gallopavo (Wild turkey).